The chain runs to 446 residues: Ribosome biogenesis protein WDR12 homolog (446 aa).

Residues 21-105 (VQITFFSKDK…ETILKIECII (85 aa)) are ubiquitin-like (UBL) domain. 2 WD repeats span residues 171–211 (KCSG…LVEK) and 216–255 (GHER…EATI). Residues 256 to 275 (YEKEEEESSAKKKRKKDTRT) form a disordered region. WD repeat units follow at residues 284 to 324 (GHRD…EVSR), 326 to 365 (KGPK…GAMV), 371 to 412 (GHQN…SSLF), and 416 to 446 (GHED…FETS).

It belongs to the WD repeat WDR12/YTM1 family.

It localises to the nucleus. It is found in the nucleolus. The protein localises to the nucleoplasm. Functionally, required for maturation of ribosomal RNAs and formation of the large ribosomal subunit. The protein is Ribosome biogenesis protein WDR12 homolog of Caenorhabditis briggsae.